The primary structure comprises 241 residues: Glucosamine-6-phosphate deaminase (241 aa).

Catalysis depends on aspartate 67, which acts as the Proton acceptor; for enolization step. The active-site For ring-opening step is the asparagine 136. The active-site Proton acceptor; for ring-opening step is histidine 138. The For ring-opening step role is filled by glutamate 143.

This sequence belongs to the glucosamine/galactosamine-6-phosphate isomerase family. NagB subfamily.

The catalysed reaction is alpha-D-glucosamine 6-phosphate + H2O = beta-D-fructose 6-phosphate + NH4(+). Its pathway is amino-sugar metabolism; N-acetylneuraminate degradation; D-fructose 6-phosphate from N-acetylneuraminate: step 5/5. Functionally, catalyzes the reversible isomerization-deamination of glucosamine 6-phosphate (GlcN6P) to form fructose 6-phosphate (Fru6P) and ammonium ion. The protein is Glucosamine-6-phosphate deaminase of Clostridium tetani (strain Massachusetts / E88).